Here is a 480-residue protein sequence, read N- to C-terminus: Aspartyl/glutamyl-tRNA(Asn/Gln) amidotransferase subunit B (480 aa).

This sequence belongs to the GatB/GatE family. GatB subfamily. In terms of assembly, heterotrimer of A, B and C subunits.

The catalysed reaction is L-glutamyl-tRNA(Gln) + L-glutamine + ATP + H2O = L-glutaminyl-tRNA(Gln) + L-glutamate + ADP + phosphate + H(+). It catalyses the reaction L-aspartyl-tRNA(Asn) + L-glutamine + ATP + H2O = L-asparaginyl-tRNA(Asn) + L-glutamate + ADP + phosphate + 2 H(+). In terms of biological role, allows the formation of correctly charged Asn-tRNA(Asn) or Gln-tRNA(Gln) through the transamidation of misacylated Asp-tRNA(Asn) or Glu-tRNA(Gln) in organisms which lack either or both of asparaginyl-tRNA or glutaminyl-tRNA synthetases. The reaction takes place in the presence of glutamine and ATP through an activated phospho-Asp-tRNA(Asn) or phospho-Glu-tRNA(Gln). This chain is Aspartyl/glutamyl-tRNA(Asn/Gln) amidotransferase subunit B, found in Streptococcus thermophilus (strain ATCC BAA-250 / LMG 18311).